A 331-amino-acid polypeptide reads, in one-letter code: Holliday junction branch migration complex subunit RuvB (331 aa).

The tract at residues 1–186 (MAKTMMQDRL…FGIVQRLEFY (186 aa)) is large ATPase domain (RuvB-L). Residues Ile-25, Arg-26, Gly-67, Lys-70, Thr-71, Thr-72, 133 to 135 (EDF), Arg-176, Tyr-186, and Arg-223 each bind ATP. Thr-71 is a Mg(2+) binding site. A small ATPAse domain (RuvB-S) region spans residues 187–257 (NIADLTTIVS…IAGSALDMLA (71 aa)). The tract at residues 260 to 331 (RRGLDHLDRR…LTQMAIDQML (72 aa)) is head domain (RuvB-H). 3 residues coordinate DNA: Arg-296, Arg-315, and Arg-320.

This sequence belongs to the RuvB family. As to quaternary structure, homohexamer. Forms an RuvA(8)-RuvB(12)-Holliday junction (HJ) complex. HJ DNA is sandwiched between 2 RuvA tetramers; dsDNA enters through RuvA and exits via RuvB. An RuvB hexamer assembles on each DNA strand where it exits the tetramer. Each RuvB hexamer is contacted by two RuvA subunits (via domain III) on 2 adjacent RuvB subunits; this complex drives branch migration. In the full resolvosome a probable DNA-RuvA(4)-RuvB(12)-RuvC(2) complex forms which resolves the HJ.

It is found in the cytoplasm. The catalysed reaction is ATP + H2O = ADP + phosphate + H(+). Functionally, the RuvA-RuvB-RuvC complex processes Holliday junction (HJ) DNA during genetic recombination and DNA repair, while the RuvA-RuvB complex plays an important role in the rescue of blocked DNA replication forks via replication fork reversal (RFR). RuvA specifically binds to HJ cruciform DNA, conferring on it an open structure. The RuvB hexamer acts as an ATP-dependent pump, pulling dsDNA into and through the RuvAB complex. RuvB forms 2 homohexamers on either side of HJ DNA bound by 1 or 2 RuvA tetramers; 4 subunits per hexamer contact DNA at a time. Coordinated motions by a converter formed by DNA-disengaged RuvB subunits stimulates ATP hydrolysis and nucleotide exchange. Immobilization of the converter enables RuvB to convert the ATP-contained energy into a lever motion, pulling 2 nucleotides of DNA out of the RuvA tetramer per ATP hydrolyzed, thus driving DNA branch migration. The RuvB motors rotate together with the DNA substrate, which together with the progressing nucleotide cycle form the mechanistic basis for DNA recombination by continuous HJ branch migration. Branch migration allows RuvC to scan DNA until it finds its consensus sequence, where it cleaves and resolves cruciform DNA. The polypeptide is Holliday junction branch migration complex subunit RuvB (Psychrobacter cryohalolentis (strain ATCC BAA-1226 / DSM 17306 / VKM B-2378 / K5)).